We begin with the raw amino-acid sequence, 336 residues long: Hdr-like menaquinol oxidoreductase cytochrome b-like subunit (336 aa).

6 helical membrane passes run Ala4 to Ile24, Ile60 to Phe80, Trp102 to Leu122, Val145 to Leu165, His184 to Ile204, and Leu232 to Phe252.

The protein localises to the cell membrane. Functionally, has menaquinol-oxidizing activity. The HmeC and HmeD subunits may together mediate electron transfer from menaquinol to an unidentified electron acceptor on the cytoplasmic side of the membrane. In Archaeoglobus profundus (strain DSM 5631 / JCM 9629 / NBRC 100127 / Av18), this protein is Hdr-like menaquinol oxidoreductase cytochrome b-like subunit (hmeC).